The sequence spans 252 residues: 2-succinyl-6-hydroxy-2,4-cyclohexadiene-1-carboxylate synthase (252 aa).

Belongs to the AB hydrolase superfamily. MenH family. Monomer.

It carries out the reaction 5-enolpyruvoyl-6-hydroxy-2-succinyl-cyclohex-3-ene-1-carboxylate = (1R,6R)-6-hydroxy-2-succinyl-cyclohexa-2,4-diene-1-carboxylate + pyruvate. It participates in quinol/quinone metabolism; 1,4-dihydroxy-2-naphthoate biosynthesis; 1,4-dihydroxy-2-naphthoate from chorismate: step 3/7. It functions in the pathway quinol/quinone metabolism; menaquinone biosynthesis. Its function is as follows. Catalyzes a proton abstraction reaction that results in 2,5-elimination of pyruvate from 2-succinyl-5-enolpyruvyl-6-hydroxy-3-cyclohexene-1-carboxylate (SEPHCHC) and the formation of 2-succinyl-6-hydroxy-2,4-cyclohexadiene-1-carboxylate (SHCHC). The chain is 2-succinyl-6-hydroxy-2,4-cyclohexadiene-1-carboxylate synthase from Escherichia coli O7:K1 (strain IAI39 / ExPEC).